The primary structure comprises 552 residues: Chromosomal replication initiator protein DnaA (552 aa).

A domain I, interacts with DnaA modulators region spans residues 1–90 (MWNETWNEIT…FTVAVTVDPT (90 aa)). The domain II stretch occupies residues 90 to 210 (TLDVIQDLPH…KPAHDPDRNG (121 aa)). A disordered region spans residues 113–213 (EHPHYSPVSQ…HDPDRNGSLN (101 aa)). Over residues 155 to 170 (PQPSQSSQSAQQQPAQ) the composition is skewed to low complexity. Residues 211 to 427 (SLNPRYTFDT…GAFIRVSAYA (217 aa)) form a domain III, AAA+ region region. Residues glycine 255, glycine 257, lysine 258, and threonine 259 each contribute to the ATP site. A domain IV, binds dsDNA region spans residues 428 to 552 (SLNEAPINMA…TQQIKSSDRA (125 aa)).

It belongs to the DnaA family. In terms of assembly, oligomerizes as a right-handed, spiral filament on DNA at oriC.

The protein localises to the cytoplasm. Its function is as follows. Plays an essential role in the initiation and regulation of chromosomal replication. ATP-DnaA binds to the origin of replication (oriC) to initiate formation of the DNA replication initiation complex once per cell cycle. Binds the DnaA box (a 9 base pair repeat at the origin) and separates the double-stranded (ds)DNA. Forms a right-handed helical filament on oriC DNA; dsDNA binds to the exterior of the filament while single-stranded (ss)DNA is stabiized in the filament's interior. The ATP-DnaA-oriC complex binds and stabilizes one strand of the AT-rich DNA unwinding element (DUE), permitting loading of DNA polymerase. After initiation quickly degrades to an ADP-DnaA complex that is not apt for DNA replication. Binds acidic phospholipids. This is Chromosomal replication initiator protein DnaA from Corynebacterium diphtheriae (strain ATCC 700971 / NCTC 13129 / Biotype gravis).